We begin with the raw amino-acid sequence, 1117 residues long: Protein cup (1117 aa).

The interval 1–106 (MQMAEAEQEN…PPPPPPLPTS (106 aa)) is disordered. Composition is skewed to pro residues over residues 54-64 (YPPPPPPPTPV) and 95-104 (CAPPPPPPLP). Ser-263 and Ser-270 each carry phosphoserine. Residues 270–326 (SPRKQVASKEAVPEQQSSQVQQKRPPSTGIHKPGSLRAPKAVRPTTAPVVSSKPVKS) are disordered. Residues 283–294 (EQQSSQVQQKRP) show a composition bias toward polar residues. The short motif at 327–333 (YTRSRLM) is the YXXXXLphi motif 1 element. Phosphoserine occurs at positions 347 and 350. The short motif at 363 to 369 (ELEGRLR) is the YXXXXLphi motif 2 element. 6 disordered regions span residues 493–528 (ISSQ…EDLS), 596–618 (KEGN…KMDH), 654–673 (TEHQ…SFQF), 679–728 (SQQN…SSSS), 984–1004 (GAKH…QARP), and 1016–1051 (ISGG…FQSF). Thr-503 is subject to Phosphothreonine. A phosphoserine mark is found at Ser-509, Ser-513, Ser-520, Ser-523, and Ser-524. Composition is skewed to low complexity over residues 679-712 (SQQN…NTNN) and 988-1001 (QAQQ…QQRQ).

It belongs to the 4E-T/EIF4E-T family. Component of the osk RNP complex, which is composed of at least exu, yps, aret/bruno, cup, and the mRNA of osk. Interacts with the decapping activators me31B and tral. Component of the nanos RNP complex, which is composed of at least smg, cup, tral, me31B, the CCR4-NOT complex members Rga/NOT2 and Caf1, and the mRNA of nanos (nos). Interacts with btz. Recruited to the 3'-UTR of nos and osk mRNAs by smg and btz, respectively. Forms a ribonucleoprotein complex (RNP) containing at least me31B, eIF4E1, cup, tral and pAbp; this interaction is required for the translational silencing of maternal mRNAs during the maternal-to-zygotic transition. No interaction was detected with pAbp in 1-5 hour embryos. Interacts with osk and vas. Interacts with Pop2, twin/CCR4, Rga, Not3 and Not1 which are all core components of the CCR4-NOT deadenylase complex; interaction with the complex is required for cup deadenylation activity. Interacts with nanos. Interacts with smg. Interacts (via YXXXXLphi motifs) with eIF4E1; the interaction promotes retention of cup in the cytoplasm. Interacts with orb; the interaction represses the orb positive autoregulatory loop. Interacts with Nup154. In terms of tissue distribution, predominantly expressed in ovaries and in 0-2 hours old embryos. Weakly expressed in testis. Expressed in young embryos through stage 9, then it decreases throughout the rest of embryogenesis. In ovaries, it is expressed in germ cells throughout pre-vitellogenic development, but is not expressed in the somatic follicle cells. In germarial cysts, the protein (and not the transcripts) is transported selectively into the oocyte.

It localises to the cytoplasm. It is found in the nucleus. The protein resides in the cytoplasmic ribonucleoprotein granule. Adapter protein that plays a central role in localization of transcripts in the oocyte and in young embryos. Maintains RNA targets in a repressed state by promoting their deadenylation and protects deadenylated mRNAs from further degradation. Binds to and recruits eIF-4E to the 3'-UTR of some mRNA targets which prevents interaction between eIF4E1 and eIF4G. This may contribute to translational repression but does not appear to be necessary for it to occur. Can promote translational repression independently of deadenylation and eIF4E1 binding. Required for correct localization of eIF4E1 in the developing oocyte. Required for translational repression of oskar (osk) mRNA. Also required for the translational repression of nanos (nos) mRNA. Promotes the accumulation of the germ plasm components osk, vas and stau at the posterior pole of the oocyte and is required for germ cell development. Represses orb positive autoregulatory activity which prevents premature activation of orb and ensures its accumulation specifically in the developing oocyte. In 0-1 hour embryos, forms a complex with me31B, cup, tral and pAbp which binds to various mRNAs including maternal mRNAs, and down-regulates their expression during the maternal-to-zygotic transition. The protein is Protein cup (cup) of Drosophila melanogaster (Fruit fly).